A 95-amino-acid polypeptide reads, in one-letter code: uncharacterized protein (95 aa).

This is an uncharacterized protein from Dictyostelium discoideum (Social amoeba).